The following is a 309-amino-acid chain: Homoserine kinase (309 aa).

Residue 91 to 101 participates in ATP binding; sequence PIGSGLGSSAC.

This sequence belongs to the GHMP kinase family. Homoserine kinase subfamily.

The protein resides in the cytoplasm. It catalyses the reaction L-homoserine + ATP = O-phospho-L-homoserine + ADP + H(+). It functions in the pathway amino-acid biosynthesis; L-threonine biosynthesis; L-threonine from L-aspartate: step 4/5. In terms of biological role, catalyzes the ATP-dependent phosphorylation of L-homoserine to L-homoserine phosphate. In Buchnera aphidicola subsp. Acyrthosiphon pisum (strain 5A), this protein is Homoserine kinase.